The chain runs to 182 residues: Isopentenyl-diphosphate Delta-isomerase (182 aa).

Mn(2+)-binding residues include histidine 25 and histidine 32. Cysteine 67 is an active-site residue. Position 69 (histidine 69) interacts with Mn(2+). Glutamate 87 contacts Mg(2+). Glutamate 114 and glutamate 116 together coordinate Mn(2+). The active site involves glutamate 116.

The protein belongs to the IPP isomerase type 1 family. As to quaternary structure, homodimer. It depends on Mg(2+) as a cofactor. The cofactor is Mn(2+).

Its subcellular location is the cytoplasm. The catalysed reaction is isopentenyl diphosphate = dimethylallyl diphosphate. Its pathway is isoprenoid biosynthesis; dimethylallyl diphosphate biosynthesis; dimethylallyl diphosphate from isopentenyl diphosphate: step 1/1. Catalyzes the 1,3-allylic rearrangement of the homoallylic substrate isopentenyl (IPP) to its highly electrophilic allylic isomer, dimethylallyl diphosphate (DMAPP). The polypeptide is Isopentenyl-diphosphate Delta-isomerase (Escherichia coli (strain K12 / MC4100 / BW2952)).